The following is a 341-amino-acid chain: Glyceraldehyde-3-phosphate dehydrogenase 2 (341 aa).

Residues Arg-12–Ile-13, Arg-78, and Thr-120 each bind NAD(+). Residues Ser-152 to Thr-154 and Thr-183 contribute to the D-glyceraldehyde 3-phosphate site. Cys-153 functions as the Nucleophile in the catalytic mechanism. Asn-184 lines the NAD(+) pocket. Residues Arg-198, Thr-211–Gly-212, and Arg-234 contribute to the D-glyceraldehyde 3-phosphate site. Asn-313 provides a ligand contact to NAD(+).

This sequence belongs to the glyceraldehyde-3-phosphate dehydrogenase family. In terms of assembly, homotetramer.

It is found in the cytoplasm. The enzyme catalyses D-glyceraldehyde 3-phosphate + phosphate + NAD(+) = (2R)-3-phospho-glyceroyl phosphate + NADH + H(+). The protein operates within carbohydrate degradation; glycolysis; pyruvate from D-glyceraldehyde 3-phosphate: step 1/5. Its function is as follows. Catalyzes the oxidative phosphorylation of glyceraldehyde 3-phosphate (G3P) to 1,3-bisphosphoglycerate (BPG) using the cofactor NAD. The first reaction step involves the formation of a hemiacetal intermediate between G3P and a cysteine residue, and this hemiacetal intermediate is then oxidized to a thioester, with concomitant reduction of NAD to NADH. The reduced NADH is then exchanged with the second NAD, and the thioester is attacked by a nucleophilic inorganic phosphate to produce BPG. This is Glyceraldehyde-3-phosphate dehydrogenase 2 (gapA2) from Staphylococcus aureus (strain COL).